We begin with the raw amino-acid sequence, 318 residues long: Ribose-phosphate pyrophosphokinase 3 (318 aa).

An ATP-binding site is contributed by 96–101 (RQDKKD). The Mg(2+) site is built by Asp128, His130, Asp139, and Asp143. His130 provides a ligand contact to ATP. The segment at 212 to 227 (NDRVAILVDDMADTCV) is binding of phosphoribosylpyrophosphate.

This sequence belongs to the ribose-phosphate pyrophosphokinase family. In terms of assembly, homodimer. The active form is probably a hexamer composed of 3 homodimers. The cofactor is Mg(2+). As to expression, testis.

The enzyme catalyses D-ribose 5-phosphate + ATP = 5-phospho-alpha-D-ribose 1-diphosphate + AMP + H(+). It functions in the pathway metabolic intermediate biosynthesis; 5-phospho-alpha-D-ribose 1-diphosphate biosynthesis; 5-phospho-alpha-D-ribose 1-diphosphate from D-ribose 5-phosphate (route I): step 1/1. With respect to regulation, activated by magnesium and inorganic phosphate. Catalyzes the synthesis of phosphoribosylpyrophosphate (PRPP) that is essential for nucleotide synthesis. The protein is Ribose-phosphate pyrophosphokinase 3 (PRPS1L1) of Homo sapiens (Human).